Consider the following 248-residue polypeptide: Triosephosphate isomerase (248 aa).

Substrate is bound at residue Asn9 to Lys11. His94 acts as the Electrophile in catalysis. Glu166 acts as the Proton acceptor in catalysis. Substrate-binding positions include Gly172, Ser212, and Gly233–Gly234.

This sequence belongs to the triosephosphate isomerase family. As to quaternary structure, homodimer.

The protein localises to the cytoplasm. The catalysed reaction is D-glyceraldehyde 3-phosphate = dihydroxyacetone phosphate. It participates in carbohydrate biosynthesis; gluconeogenesis. The protein operates within carbohydrate degradation; glycolysis; D-glyceraldehyde 3-phosphate from glycerone phosphate: step 1/1. In terms of biological role, involved in the gluconeogenesis. Catalyzes stereospecifically the conversion of dihydroxyacetone phosphate (DHAP) to D-glyceraldehyde-3-phosphate (G3P). This is Triosephosphate isomerase from Clostridium botulinum (strain Okra / Type B1).